Here is a 625-residue protein sequence, read N- to C-terminus: MLVCGKGFLKCRAPGVPFFCDKRKSFFTKTKRGFHSLPLGTGVRVYFNNNLRYSSNSIEVVEKAAINMGSKEDKADNPALSSYDDAMEALSTLISRRNRGDRTPTKGNRDKLEQVVTYLKILDLEDKIKELKVIHVAGTKGKGSTCVFSEAILRNCGFRTGMFTSPHLIDVRERFRIDGLDISEEKFLQYFWECWKLLKEKAVDGLTMPPLFQFLTVLAFKIFVCEKVDVAVIEVGLGGKLDSTNVIQKPVVCGIASLGMDHMDILGNTLADIAFHKAGIFKPQIPAFTVPQLSEAMDVLQKTANNLEVPLEVVAPLEPKKLDGVTLGLSGDHQLVNAGLAVSLSRCWLQRTGNWKKIFPNESKETEIPVAFCRGLATARLHGRAQVVHDVVSDPQDSSDSMETPCGDLIFYLDGAHSPESMEACGRWFSSAVRGDKSLSTAVNGYMRHGEYGTDLNRVSKQILLFNCMEVRDPQVLLPKLVTTCASSGTHFSRALFVPSMSTYNKVISGASAIPSDTRRKDLTWQFRLQRLWEKSIQGTDAGLDHTLKPDGITALPPHDFLCGDAPQCGGPAGTPVTSSAVMPSLPLTINWLRDCVRRNPSLKLEVLVTGSLHLVGDVLRLLKR.

141–144 (GKGS) contacts ATP. Positions 165, 234, and 262 each coordinate Mg(2+). Residues Arg-384 and Asp-414 each coordinate ATP.

This sequence belongs to the folylpolyglutamate synthase family. A monovalent cation is required as a cofactor.

The protein resides in the mitochondrion inner membrane. It is found in the mitochondrion matrix. The enzyme catalyses (6S)-5,6,7,8-tetrahydrofolyl-(gamma-L-Glu)(n) + L-glutamate + ATP = (6S)-5,6,7,8-tetrahydrofolyl-(gamma-L-Glu)(n+1) + ADP + phosphate + H(+). Its pathway is cofactor biosynthesis; tetrahydrofolylpolyglutamate biosynthesis. Catalyzes conversion of folates to polyglutamate derivatives allowing concentration of folate compounds in the cell and the intracellular retention of these cofactors, which are important substrates for most of the folate-dependent enzymes that are involved in one-carbon transfer reactions involved in purine, pyrimidine and amino acid synthesis. Essential for organellar and whole-plant folate homeostasis. The chain is Folylpolyglutamate synthase from Arabidopsis thaliana (Mouse-ear cress).